Here is a 132-residue protein sequence, read N- to C-terminus: Phosphoribosyl-AMP cyclohydrolase (132 aa).

Mg(2+) is bound at residue D82. C83 contacts Zn(2+). Mg(2+)-binding residues include D84 and D86. The Zn(2+) site is built by C100 and C107.

The protein belongs to the PRA-CH family. Homodimer. Mg(2+) serves as cofactor. The cofactor is Zn(2+).

Its subcellular location is the cytoplasm. The catalysed reaction is 1-(5-phospho-beta-D-ribosyl)-5'-AMP + H2O = 1-(5-phospho-beta-D-ribosyl)-5-[(5-phospho-beta-D-ribosylamino)methylideneamino]imidazole-4-carboxamide. The protein operates within amino-acid biosynthesis; L-histidine biosynthesis; L-histidine from 5-phospho-alpha-D-ribose 1-diphosphate: step 3/9. Catalyzes the hydrolysis of the adenine ring of phosphoribosyl-AMP. The sequence is that of Phosphoribosyl-AMP cyclohydrolase from Dechloromonas aromatica (strain RCB).